A 577-amino-acid chain; its full sequence is Cleavage stimulation factor subunit 2 (577 aa).

Residue Ser14 is modified to Phosphoserine. The 79-residue stretch at 16–94 (RSVFVGNIPY…RALRVDNAAS (79 aa)) folds into the RRM domain. The interval 108–248 (APVIESPYGE…VNGAPPLMQA (141 aa)) is interactions with CSTF3 and SYMPK. Lys189 is covalently cross-linked (Glycyl lysine isopeptide (Lys-Gly) (interchain with G-Cter in SUMO2)). The segment at 207–230 (PVHGAGPGSGSNVSMNQQNPQAPQ) is disordered. Arg308 is subject to Omega-N-methylarginine. Positions 319–409 (RGLLGDAPND…DGRGGRDPRG (91 aa)) are disordered. Positions 360–373 (PGHESRGPPPHELR) are enriched in basic and acidic residues. The stretch at 410 to 414 (IDARG) is one 1; approximate repeat. Residues 410–469 (IDARGMEARAMEARGLDARGLEARAMEARAMEARAMEARAMEARAMEVRGMEARGMDTRG) are 12 X 5 AA tandem repeats of M-E-A-R-[AG]. 2 repeat units span residues 415-419 (MEARA) and 420-424 (MEARG). The 4; approximate repeat unit spans residues 425-429 (LDARG). One copy of the 5; approximate repeat lies at 430–434 (LEARA). 4 repeat units span residues 435–439 (MEARA), 440–444 (MEARA), 445–449 (MEARA), and 450–454 (MEARA). The stretch at 455–459 (MEVRG) is one 10; approximate repeat. Repeat unit 11 spans residues 460-464 (MEARG). A 12; approximate repeat occupies 465–469 (MDTRG). 2 positions are modified to omega-N-methylarginine: Arg468 and Arg475. Residues 509–532 (LQGASIQGGSQPGGFSPGQNQVTP) form a disordered region. The tract at residues 514-577 (IQGGSQPGGF…EQIQKSTGAP (64 aa)) is interaction with RPO2TC1. Ser518 and Ser524 each carry phosphoserine.

The CSTF complex is composed of CSTF1 (50 kDa subunit), CSTF2 (64 kDa subunit) and CSTF3 (77 kDa subunit). CSTF2 directly interacts with CSTF3, SYMPK and RPO2TC1. Interacts with HSF1 in heat-stressed cells. Interacts with CPSF2, CPSF3 and FIP1L1. Interacts with DDX1.

The protein resides in the nucleus. Its function is as follows. One of the multiple factors required for polyadenylation and 3'-end cleavage of mammalian pre-mRNAs. This subunit is directly involved in the binding to pre-mRNAs. This chain is Cleavage stimulation factor subunit 2 (CSTF2), found in Pongo abelii (Sumatran orangutan).